The chain runs to 234 residues: Exotoxin type G (234 aa).

The first 24 residues, 1-24, serve as a signal peptide directing secretion; that stretch reads MKTNILTIIILSCVFSYGSQLAYA.

This sequence belongs to the staphylococcal/streptococcal toxin family.

Functionally, mitogenic for human peripheral blood lymphocytes. This Streptococcus pyogenes serotype M1 protein is Exotoxin type G (speG).